Here is a 178-residue protein sequence, read N- to C-terminus: MAVAARAAAVACLLVVGLAAVAGVDGATASSPAPAPAVDCTAEALKLADCLDYVTPGKTAPSRPSKLCCGEVKGALKDSAAVGCLCAAFTSKTLPLPINITRALHLPAACGADASAFSKCLAPAPSPSVAPGTSSGSGGAAAAPAKGAAAARSPMASTTAVLVVAAAVAAPLLAFFHF.

Residues 1-26 form the signal peptide; sequence MAVAARAAAVACLLVVGLAAVAGVDG. Cystine bridges form between C50–C68 and C69–C110. A glycan (N-linked (GlcNAc...) asparagine) is linked at N99. A149 is lipidated: GPI-anchor amidated alanine. Positions 150–178 are cleaved as a propeptide — removed in mature form; that stretch reads AARSPMASTTAVLVVAAAVAAPLLAFFHF.

This sequence belongs to the plant LTP family. O-glycosylated on hydroxyprolines; noncontiguous hydroxylproline residues are glycosylated with arabinogalactan. As to expression, expressed in roots, stems, leaves, flowers and seeds.

It localises to the vacuole. It is found in the aleurone grain membrane. The protein is Non-specific lipid transfer protein-like 1 (LTPL1) of Oryza sativa subsp. japonica (Rice).